A 220-amino-acid chain; its full sequence is Phosphatidylserine decarboxylase proenzyme (220 aa).

Ser-188 acts as the Schiff-base intermediate with substrate; via pyruvic acid in catalysis. The residue at position 188 (Ser-188) is a Pyruvic acid (Ser); by autocatalysis.

Belongs to the phosphatidylserine decarboxylase family. PSD-A subfamily. In terms of assembly, heterodimer of a large membrane-associated beta subunit and a small pyruvoyl-containing alpha subunit. Pyruvate serves as cofactor. Is synthesized initially as an inactive proenzyme. Formation of the active enzyme involves a self-maturation process in which the active site pyruvoyl group is generated from an internal serine residue via an autocatalytic post-translational modification. Two non-identical subunits are generated from the proenzyme in this reaction, and the pyruvate is formed at the N-terminus of the alpha chain, which is derived from the carboxyl end of the proenzyme. The post-translation cleavage follows an unusual pathway, termed non-hydrolytic serinolysis, in which the side chain hydroxyl group of the serine supplies its oxygen atom to form the C-terminus of the beta chain, while the remainder of the serine residue undergoes an oxidative deamination to produce ammonia and the pyruvoyl prosthetic group on the alpha chain.

The protein localises to the cell membrane. It carries out the reaction a 1,2-diacyl-sn-glycero-3-phospho-L-serine + H(+) = a 1,2-diacyl-sn-glycero-3-phosphoethanolamine + CO2. It participates in phospholipid metabolism; phosphatidylethanolamine biosynthesis; phosphatidylethanolamine from CDP-diacylglycerol: step 2/2. Functionally, catalyzes the formation of phosphatidylethanolamine (PtdEtn) from phosphatidylserine (PtdSer). The sequence is that of Phosphatidylserine decarboxylase proenzyme from Cytophaga hutchinsonii (strain ATCC 33406 / DSM 1761 / CIP 103989 / NBRC 15051 / NCIMB 9469 / D465).